The chain runs to 153 residues: NADH dehydrogenase [ubiquinone] 1 beta subcomplex subunit 11, mitochondrial (153 aa).

The N-terminal 29 residues, 1–29 (MAAGLFGLSARRLLAAAATRGLPAARVRW), are a transit peptide targeting the mitochondrion. The segment at 40–76 (PSAVAGKRPPEPTTPWQEDPEPEDENLYEKNPDSHGY) is disordered. A compositionally biased stretch (basic and acidic residues) spans 66 to 76 (LYEKNPDSHGY). Residues 89–109 (LVFFFGVSIILVLGSTFVAYL) form a helical membrane-spanning segment.

This sequence belongs to the complex I NDUFB11 subunit family. Complex I is composed of 45 different subunits. Interacts with BCAP31. In terms of tissue distribution, ubiquitous.

It localises to the mitochondrion inner membrane. In terms of biological role, accessory subunit of the mitochondrial membrane respiratory chain NADH dehydrogenase (Complex I), that is believed not to be involved in catalysis. Complex I functions in the transfer of electrons from NADH to the respiratory chain. The immediate electron acceptor for the enzyme is believed to be ubiquinone. This is NADH dehydrogenase [ubiquinone] 1 beta subcomplex subunit 11, mitochondrial (NDUFB11) from Homo sapiens (Human).